Consider the following 128-residue polypeptide: UPF0325 protein CKO_03204 (128 aa).

This sequence belongs to the UPF0325 family.

The polypeptide is UPF0325 protein CKO_03204 (Citrobacter koseri (strain ATCC BAA-895 / CDC 4225-83 / SGSC4696)).